Reading from the N-terminus, the 199-residue chain is Protein-methionine-sulfoxide reductase heme-binding subunit MsrQ (199 aa).

The next 4 membrane-spanning stretches (helical) occupy residues 10-30, 82-102, 116-136, and 153-173; these read WLKV…FWAI, LWCF…ELGI, PYLT…LTST, and VVYL…KILS.

The protein belongs to the MsrQ family. Heterodimer of a catalytic subunit (MsrP) and a heme-binding subunit (MsrQ). FMN serves as cofactor. The cofactor is heme b.

It is found in the cell inner membrane. Its function is as follows. Part of the MsrPQ system that repairs oxidized periplasmic proteins containing methionine sulfoxide residues (Met-O), using respiratory chain electrons. Thus protects these proteins from oxidative-stress damage caused by reactive species of oxygen and chlorine generated by the host defense mechanisms. MsrPQ is essential for the maintenance of envelope integrity under bleach stress, rescuing a wide series of structurally unrelated periplasmic proteins from methionine oxidation, including the primary periplasmic chaperone SurA and the lipoprotein Pal. MsrQ provides electrons for reduction to the reductase catalytic subunit MsrP, using the quinone pool of the respiratory chain. The protein is Protein-methionine-sulfoxide reductase heme-binding subunit MsrQ of Salmonella enteritidis PT4 (strain P125109).